Here is a 141-residue protein sequence, read N- to C-terminus: Hemoglobin subunit alpha-D (141 aa).

Residues 1–141 (MLTADDKKIL…VAAVLAEKYR (141 aa)) enclose the Globin domain. His58 and His87 together coordinate heme b.

The protein belongs to the globin family. As to quaternary structure, heterotetramer of two alpha-D chains and two beta chains. As to expression, red blood cells.

Its function is as follows. Involved in oxygen transport from the lung to the various peripheral tissues. The chain is Hemoglobin subunit alpha-D (HBAD) from Branta canadensis (Canada goose).